We begin with the raw amino-acid sequence, 508 residues long: Photosystem II CP47 reaction center protein (508 aa).

6 helical membrane passes run 21–36, 101–115, 140–156, 203–218, 237–252, and 457–472; these read SVHI…WAGS, IVFS…IWHW, GIHL…FGAF, IAAG…FHLS, VLSS…AFVV, and SFAL…HGAR.

The protein belongs to the PsbB/PsbC family. PsbB subfamily. PSII is composed of 1 copy each of membrane proteins PsbA, PsbB, PsbC, PsbD, PsbE, PsbF, PsbH, PsbI, PsbJ, PsbK, PsbL, PsbM, PsbT, PsbX, PsbY, PsbZ, Psb30/Ycf12, at least 3 peripheral proteins of the oxygen-evolving complex and a large number of cofactors. It forms dimeric complexes. Binds multiple chlorophylls. PSII binds additional chlorophylls, carotenoids and specific lipids. serves as cofactor.

The protein localises to the plastid. It localises to the chloroplast thylakoid membrane. Functionally, one of the components of the core complex of photosystem II (PSII). It binds chlorophyll and helps catalyze the primary light-induced photochemical processes of PSII. PSII is a light-driven water:plastoquinone oxidoreductase, using light energy to abstract electrons from H(2)O, generating O(2) and a proton gradient subsequently used for ATP formation. In Panax ginseng (Korean ginseng), this protein is Photosystem II CP47 reaction center protein.